Consider the following 218-residue polypeptide: MYDRWFSQQELQVLPFADEDEQRNQTWLELVGEAQQLMANAARQMSRGRLRWQPAGWSSWSRIHRHAEFLTRLNEMHAAEPQMREQTGVTPEMIDFITRAFAESKLAIWARYLNAEELAFTRQHYFDRLMEWPALVADLHRACREKRDRPPRKVSSWRSAAWRCSSLTRVKMRRRSRISLCHAQVPALMKGTWMTSEVLSWLQQAIGVMMRQAQGPRE.

It localises to the periplasm. Albicidin resistance protein binds to form a complex without antibiotic activity but without catalyzing any further chemical modifications to albicidin. This is Albicidin resistance protein from Klebsiella oxytoca.